Here is a 314-residue protein sequence, read N- to C-terminus: uncharacterized protein (314 aa).

The next 10 helical transmembrane spans lie at F4–G23, F36–I53, T68–F90, A97–V116, V131–S153, P174–W196, F200–H222, E229–A251, M261–V283, and A290–V309.

This sequence belongs to the auxin efflux carrier (TC 2.A.69) family.

It is found in the cell membrane. This is an uncharacterized protein from Escherichia coli O157:H7.